We begin with the raw amino-acid sequence, 295 residues long: MSIDINNRLYTALVTPMFVDGSIDWGSFENLLRIQEYQGCGILILGSTGEALALDFDEQCEVVRFVTNLNLNVPIMVGVGGFQLTKQLQWIEFCQTQRVDCFLVVTPLYAKPGSASQTSWFKTVLDKAERPCMLYNVPSRTGVNLAEEVLTSLKDHPNLWALKEASGDIQRCARYQELAPNLVIYSGEDGLLPELADVGVKGLVSVISNIWPEQTKEYVKQSLAHQIAITDKVIWEVATRSCFSVTNPIPVKAWLAYSGVITTNTLRAPLLANELEDLSLLIGADSLVKDWFSHI.

Thr48 serves as a coordination point for pyruvate. Residue Tyr135 is the Proton donor/acceptor of the active site. Lys163 acts as the Schiff-base intermediate with substrate in catalysis. Pyruvate is bound at residue Val204.

The protein belongs to the DapA family. Homotetramer; dimer of dimers.

It is found in the cytoplasm. It catalyses the reaction L-aspartate 4-semialdehyde + pyruvate = (2S,4S)-4-hydroxy-2,3,4,5-tetrahydrodipicolinate + H2O + H(+). It participates in amino-acid biosynthesis; L-lysine biosynthesis via DAP pathway; (S)-tetrahydrodipicolinate from L-aspartate: step 3/4. Functionally, catalyzes the condensation of (S)-aspartate-beta-semialdehyde [(S)-ASA] and pyruvate to 4-hydroxy-tetrahydrodipicolinate (HTPA). This is 4-hydroxy-tetrahydrodipicolinate synthase from Francisella philomiragia subsp. philomiragia (strain ATCC 25017 / CCUG 19701 / FSC 153 / O#319-036).